The primary structure comprises 1033 residues: Probable LRR receptor-like serine/threonine-protein kinase At1g56140 (1033 aa).

The first 28 residues, 1–28 (MLRLWRYLCLLLTVWFLCNFGPVYVVRA), serve as a signal peptide directing secretion. The Extracellular portion of the chain corresponds to 29-636 (QNRTGATTHP…PSKGKSMTGT (608 aa)). 3 N-linked (GlcNAc...) asparagine glycosylation sites follow: asparagine 30, asparagine 60, and asparagine 94. 13 LRR repeats span residues 97-121 (ICRITNIKVYAMEVVGSIPQQLWTL), 122-145 (EYLTNLNLGQNVLTGSLPPALGNL), 147-169 (RMRWMTFGINALSGPIPKEIGLL), 170-193 (TDLRLLSISSNNFSGSIPDEIGRC), 195-217 (KLQQIYIDSSGLSGGLPVSFANL), 241-264 (WTKLTTLRILGTGLSGPIPASFSN), 265-288 (LTSLTELRLGDISNGNSSLEFIKD), 289-313 (MKSLSILVLRNNNLTGTIPSNIGEY), 314-337 (SSLRQLDLSFNKLHGTIPASLFNL), 339-361 (QLTHLFLGNNTLNGSLPTQKGQS), 363-382 (SNVDVSYNDLSGSLPSWVSL), 383-406 (PNLNLNLVANNFTLEGLDNRVLSG), and 422-445 (IYSDFSINCGGPEIRSVTEAVFER). An N-linked (GlcNAc...) asparagine glycan is attached at asparagine 144. Asparagine 181 carries an N-linked (GlcNAc...) asparagine glycan. Residues asparagine 264, asparagine 280, and asparagine 301 are each glycosylated (N-linked (GlcNAc...) asparagine). 2 N-linked (GlcNAc...) asparagine glycosylation sites follow: asparagine 347 and asparagine 351. Asparagine 393 carries N-linked (GlcNAc...) asparagine glycosylation. A glycan (N-linked (GlcNAc...) asparagine) is linked at asparagine 579. The chain crosses the membrane as a helical span at residues 637-657 (IVGVIVGVGLLSIISGVVIFI). Topologically, residues 658–1033 (IRKRRKRYTD…MLGAQMNEGR (376 aa)) are cytoplasmic. At threonine 682 the chain carries Phosphothreonine. Positions 693 to 951 (FDPSNKLGEG…LCTQTSHALR (259 aa)) constitute a Protein kinase domain. ATP contacts are provided by residues 699-707 (LGEGGFGPV) and lysine 721. Tyrosine 766 is modified (phosphotyrosine). The active-site Proton acceptor is aspartate 817. 2 positions are modified to phosphoserine: serine 821 and serine 850. A phosphothreonine mark is found at threonine 851 and threonine 856. At tyrosine 864 the chain carries Phosphotyrosine. Residues 1012–1033 (SEISPRNNDARPMLGAQMNEGR) form a disordered region.

The protein belongs to the protein kinase superfamily. Ser/Thr protein kinase family.

The protein localises to the membrane. The enzyme catalyses L-seryl-[protein] + ATP = O-phospho-L-seryl-[protein] + ADP + H(+). The catalysed reaction is L-threonyl-[protein] + ATP = O-phospho-L-threonyl-[protein] + ADP + H(+). The chain is Probable LRR receptor-like serine/threonine-protein kinase At1g56140 from Arabidopsis thaliana (Mouse-ear cress).